Reading from the N-terminus, the 484-residue chain is Glycogen synthase 2 (484 aa).

Arg-15 is a binding site for ADP-alpha-D-glucose.

It belongs to the glycosyltransferase 1 family. Bacterial/plant glycogen synthase subfamily.

The enzyme catalyses [(1-&gt;4)-alpha-D-glucosyl](n) + ADP-alpha-D-glucose = [(1-&gt;4)-alpha-D-glucosyl](n+1) + ADP + H(+). It participates in glycan biosynthesis; glycogen biosynthesis. Functionally, synthesizes alpha-1,4-glucan chains using ADP-glucose. This is Glycogen synthase 2 from Geobacter sulfurreducens (strain ATCC 51573 / DSM 12127 / PCA).